A 442-amino-acid polypeptide reads, in one-letter code: Serum response factor-binding protein 1 (442 aa).

2 coiled-coil regions span residues 55-77 (EDAL…AMKE) and 118-140 (LLKR…RQNA). Disordered stretches follow at residues 137–336 (RQNA…LETH) and 358–442 (FHSL…TFDD). 2 stretches are compositionally biased toward basic and acidic residues: residues 149 to 159 (ASKESQCEDIP) and 167 to 188 (ESQH…DPTT). K202 participates in a covalent cross-link: Glycyl lysine isopeptide (Lys-Gly) (interchain with G-Cter in SUMO2). A Phosphoserine modification is found at S215. Residues 237–247 (GNHSQGKASTR) are compositionally biased toward polar residues. Residues 266–278 (VSEEEKEYFDDST) are compositionally biased toward acidic residues. A phosphoserine mark is found at S277, S292, and S294. K329 participates in a covalent cross-link: Glycyl lysine isopeptide (Lys-Gly) (interchain with G-Cter in SUMO2). S362 bears the Phosphoserine mark. A compositionally biased stretch (basic and acidic residues) spans 367–382 (SRRDPREQAPKNKAPD).

As to quaternary structure, interacts with SRF. Forms complexes with SRF and SRF cofactors ARID2, MYOCD and NKX2-5. Interacts with the N-terminus of SLC2A4.

Its subcellular location is the cytoplasm. It localises to the perinuclear region. May be involved in regulating transcriptional activation of cardiac genes during the aging process. May play a role in biosynthesis and/or processing of SLC2A4 in adipose cells. The chain is Serum response factor-binding protein 1 from Rattus norvegicus (Rat).